Here is a 260-residue protein sequence, read N- to C-terminus: Myb transcription factor 42 (260 aa).

2 HTH myb-type domains span residues 9 to 61 and 62 to 116; these read KAHT…INYL and RPDL…RRKL. 2 consecutive DNA-binding regions (H-T-H motif) follow at residues 37-61 and 89-112; these read WRSL…INYL and WSLI…NTHI.

Mainly expressed in the aerial parts and, to a lower extent, in roots.

It localises to the nucleus. In terms of biological role, transcription factor that negatively regulates the expression of caffeic acid O-methyl-transferase genes (COMTs) and of other genes involved in the biosynthesis of lignin, thus preventing lignification. The sequence is that of Myb transcription factor 42 from Zea mays (Maize).